Here is a 136-residue protein sequence, read N- to C-terminus: Small ribosomal subunit protein uS9 (136 aa).

This sequence belongs to the universal ribosomal protein uS9 family.

The polypeptide is Small ribosomal subunit protein uS9 (Borrelia duttonii (strain Ly)).